Here is a 212-residue protein sequence, read N- to C-terminus: MRIAVLKFPGTNGDYDVLRALELAGARGELVWYRDYAAGKYDAVVLAGGFSYGDRLRAGAIAAATKAMDHVREDAERGVPVLGICNGFQILTEAGLLPGALIPNDPPGFISRWVAVRVVDTRTPFTYLYEEGEVVYMPIAHGEGRYVPAGEYKAAFKYVDNPNGSYDNVAGVYEKNVLGLMPHPERAVDPHVSRRGAGGLKLWLGLISWLRR.

The Glutamine amidotransferase type-1 domain maps to 2–212 (RIAVLKFPGT…WLGLISWLRR (211 aa)). The active-site Nucleophile is the C85. Catalysis depends on residues H183, E185, and H191.

As to quaternary structure, part of the FGAM synthase complex composed of 1 PurL, 1 PurQ and 2 PurS subunits.

The protein localises to the cytoplasm. It carries out the reaction N(2)-formyl-N(1)-(5-phospho-beta-D-ribosyl)glycinamide + L-glutamine + ATP + H2O = 2-formamido-N(1)-(5-O-phospho-beta-D-ribosyl)acetamidine + L-glutamate + ADP + phosphate + H(+). The catalysed reaction is L-glutamine + H2O = L-glutamate + NH4(+). The protein operates within purine metabolism; IMP biosynthesis via de novo pathway; 5-amino-1-(5-phospho-D-ribosyl)imidazole from N(2)-formyl-N(1)-(5-phospho-D-ribosyl)glycinamide: step 1/2. Part of the phosphoribosylformylglycinamidine synthase complex involved in the purines biosynthetic pathway. Catalyzes the ATP-dependent conversion of formylglycinamide ribonucleotide (FGAR) and glutamine to yield formylglycinamidine ribonucleotide (FGAM) and glutamate. The FGAM synthase complex is composed of three subunits. PurQ produces an ammonia molecule by converting glutamine to glutamate. PurL transfers the ammonia molecule to FGAR to form FGAM in an ATP-dependent manner. PurS interacts with PurQ and PurL and is thought to assist in the transfer of the ammonia molecule from PurQ to PurL. This chain is Phosphoribosylformylglycinamidine synthase subunit PurQ, found in Pyrobaculum aerophilum (strain ATCC 51768 / DSM 7523 / JCM 9630 / CIP 104966 / NBRC 100827 / IM2).